A 173-amino-acid polypeptide reads, in one-letter code: Peptide deformylase (173 aa).

The Fe cation site is built by C98 and H140. E141 is a catalytic residue. H144 serves as a coordination point for Fe cation.

Belongs to the polypeptide deformylase family. The cofactor is Fe(2+).

It carries out the reaction N-terminal N-formyl-L-methionyl-[peptide] + H2O = N-terminal L-methionyl-[peptide] + formate. In terms of biological role, removes the formyl group from the N-terminal Met of newly synthesized proteins. Requires at least a dipeptide for an efficient rate of reaction. N-terminal L-methionine is a prerequisite for activity but the enzyme has broad specificity at other positions. This is Peptide deformylase from Caulobacter vibrioides (strain ATCC 19089 / CIP 103742 / CB 15) (Caulobacter crescentus).